The chain runs to 426 residues: 4-hydroxy-3-methylbut-2-en-1-yl diphosphate synthase (flavodoxin) (426 aa).

Residues cysteine 320, cysteine 323, cysteine 366, and glutamate 373 each contribute to the [4Fe-4S] cluster site.

It belongs to the IspG family. It depends on [4Fe-4S] cluster as a cofactor.

It carries out the reaction (2E)-4-hydroxy-3-methylbut-2-enyl diphosphate + oxidized [flavodoxin] + H2O + 2 H(+) = 2-C-methyl-D-erythritol 2,4-cyclic diphosphate + reduced [flavodoxin]. Its pathway is isoprenoid biosynthesis; isopentenyl diphosphate biosynthesis via DXP pathway; isopentenyl diphosphate from 1-deoxy-D-xylulose 5-phosphate: step 5/6. Its function is as follows. Converts 2C-methyl-D-erythritol 2,4-cyclodiphosphate (ME-2,4cPP) into 1-hydroxy-2-methyl-2-(E)-butenyl 4-diphosphate. This Wolbachia sp. subsp. Drosophila simulans (strain wRi) protein is 4-hydroxy-3-methylbut-2-en-1-yl diphosphate synthase (flavodoxin).